An 88-amino-acid polypeptide reads, in one-letter code: Large ribosomal subunit protein bL27 (88 aa).

The segment at 1-25 is disordered; that stretch reads MAHKKGASSSSNGRDSEAKRLGVKR.

Belongs to the bacterial ribosomal protein bL27 family.

The polypeptide is Large ribosomal subunit protein bL27 (Corynebacterium diphtheriae (strain ATCC 700971 / NCTC 13129 / Biotype gravis)).